The sequence spans 87 residues: uncharacterized protein (87 aa).

Residues 1 to 26 (MMSTQHFILSLTILIIISNLHDEVNA) form the signal peptide. 3 disulfides stabilise this stretch: cysteine 61–cysteine 75, cysteine 68–cysteine 79, and cysteine 74–cysteine 84.

The protein resides in the secreted. This is an uncharacterized protein from Schistosoma japonicum (Blood fluke).